The following is a 72-amino-acid chain: Exodeoxyribonuclease 7 small subunit (72 aa).

This sequence belongs to the XseB family. Heterooligomer composed of large and small subunits.

It localises to the cytoplasm. It catalyses the reaction Exonucleolytic cleavage in either 5'- to 3'- or 3'- to 5'-direction to yield nucleoside 5'-phosphates.. Bidirectionally degrades single-stranded DNA into large acid-insoluble oligonucleotides, which are then degraded further into small acid-soluble oligonucleotides. This Chlamydia muridarum (strain MoPn / Nigg) protein is Exodeoxyribonuclease 7 small subunit.